We begin with the raw amino-acid sequence, 396 residues long: Acetate kinase (396 aa).

Residue asparagine 6 coordinates Mg(2+). Lysine 13 lines the ATP pocket. Substrate is bound at residue arginine 89. The active-site Proton donor/acceptor is the aspartate 145. Residues 205–209 (HLGNG), 280–282 (DMR), and 329–333 (GVGEN) each bind ATP. Position 383 (glutamate 383) interacts with Mg(2+).

This sequence belongs to the acetokinase family. In terms of assembly, homodimer. Mg(2+) is required as a cofactor. Requires Mn(2+) as cofactor.

The protein localises to the cytoplasm. It catalyses the reaction acetate + ATP = acetyl phosphate + ADP. It functions in the pathway metabolic intermediate biosynthesis; acetyl-CoA biosynthesis; acetyl-CoA from acetate: step 1/2. Catalyzes the formation of acetyl phosphate from acetate and ATP. Can also catalyze the reverse reaction. This is Acetate kinase from Mesoplasma florum (strain ATCC 33453 / NBRC 100688 / NCTC 11704 / L1) (Acholeplasma florum).